Consider the following 21-residue polypeptide: Japonicin-2 (21 aa).

A disulfide bridge connects residues cysteine 14 and cysteine 21.

Expressed by the skin glands.

The protein localises to the secreted. In terms of biological role, antibacterial activity against the Gram-negative bacterium E.coli and the Gram-positive bacterium S.aureus. The polypeptide is Japonicin-2 (Rana japonica (Japanese reddish frog)).